The chain runs to 737 residues: DNA polymerase iota (737 aa).

A UmuC domain is found at 17-231; it reads IIHLDMDYFY…GDLKRVTGIG (215 aa). Asp21 lines the Mg(2+) pocket. A 2'-deoxyribonucleoside 5'-triphosphate-binding residues include Tyr26 and Arg58. Asp113 contacts Mg(2+). Glu114 is a catalytic residue. DNA-binding stretches follow at residues 212 to 277 and 288 to 413; these read TYAE…FGRD and KTIG…SKFQ. 4 disordered regions span residues 443-464, 482-515, 557-581, and 607-643; these read TSLT…RSSP, SPVP…SPKK, DSEK…RFRT, and LSSN…PSPT. Residues 491–502 show a composition bias toward polar residues; sequence GSESAATNSDFS. Low complexity-rich tracts occupy residues 563–577, 607–618, and 632–643; these read PMST…APAP, LSSNASSTASSP, and PSTTTLPFPSPT. A Ubiquitin-binding (UBM) motif is present at residues 669–686; it reads VDAEVFKELPVELQTELI.

Belongs to the DNA polymerase type-Y family. Mg(2+) serves as cofactor. It depends on Mn(2+) as a cofactor.

The protein resides in the nucleus. It catalyses the reaction DNA(n) + a 2'-deoxyribonucleoside 5'-triphosphate = DNA(n+1) + diphosphate. In terms of biological role, error-prone DNA polymerase specifically involved in DNA repair. Plays an important role in translesion synthesis, where the normal high-fidelity DNA polymerases cannot proceed and DNA synthesis stalls. Favors Hoogsteen base-pairing in the active site. Inserts the correct base with higher fidelity opposite an adenosine template. Exhibits low fidelity and efficiency opposite a thymidine template, where it will preferentially insert guanosine. Forms a Schiff base with 5'-deoxyribose phosphate at abasic sites, but may not have lyase activity. This is DNA polymerase iota from Drosophila melanogaster (Fruit fly).